A 318-amino-acid polypeptide reads, in one-letter code: NADH-ubiquinone oxidoreductase chain 1 (318 aa).

8 consecutive transmembrane segments (helical) span residues 5–25 (IISS…LTLI), 69–89 (SIFL…ILWI), 102–122 (LGLM…LTSG), 148–168 (LGLM…KLFI), 174–194 (IWLL…TLAE), 215–235 (VEFS…NILF), 253–273 (LYFS…FLWV), and 293–313 (FLPI…FFGV).

Belongs to the complex I subunit 1 family.

The protein localises to the mitochondrion inner membrane. The catalysed reaction is a ubiquinone + NADH + 5 H(+)(in) = a ubiquinol + NAD(+) + 4 H(+)(out). In terms of biological role, core subunit of the mitochondrial membrane respiratory chain NADH dehydrogenase (Complex I) that is believed to belong to the minimal assembly required for catalysis. Complex I functions in the transfer of electrons from NADH to the respiratory chain. The immediate electron acceptor for the enzyme is believed to be ubiquinone. In Myxine glutinosa (Atlantic hagfish), this protein is NADH-ubiquinone oxidoreductase chain 1 (MT-ND1).